Consider the following 273-residue polypeptide: Outer surface protein A (273 aa).

The first 16 residues, 1 to 16, serve as a signal peptide directing secretion; that stretch reads MKKYLLGIGLILALIA. Residue Cys17 is the site of N-palmitoyl cysteine attachment. Cys17 carries the S-diacylglycerol cysteine lipid modification.

Belongs to the OspA lipoprotein family.

The protein resides in the cell outer membrane. It localises to the cell surface. In Borreliella burgdorferi (Lyme disease spirochete), this protein is Outer surface protein A.